Here is a 189-residue protein sequence, read N- to C-terminus: Protein GrpE (189 aa).

Residues 1-38 show a composition bias toward basic and acidic residues; it reads MTKSNETERMEESEETHSSDIRSASESDHASGSDHTES. A disordered region spans residues 1-54; that stretch reads MTKSNETERMEESEETHSSDIRSASESDHASGSDHTESADEIPTADAEQGELEQ.

This sequence belongs to the GrpE family. Homodimer.

It is found in the cytoplasm. Its function is as follows. Participates actively in the response to hyperosmotic and heat shock by preventing the aggregation of stress-denatured proteins, in association with DnaK and GrpE. It is the nucleotide exchange factor for DnaK and may function as a thermosensor. Unfolded proteins bind initially to DnaJ; upon interaction with the DnaJ-bound protein, DnaK hydrolyzes its bound ATP, resulting in the formation of a stable complex. GrpE releases ADP from DnaK; ATP binding to DnaK triggers the release of the substrate protein, thus completing the reaction cycle. Several rounds of ATP-dependent interactions between DnaJ, DnaK and GrpE are required for fully efficient folding. This Tropheryma whipplei (strain Twist) (Whipple's bacillus) protein is Protein GrpE.